The following is a 380-amino-acid chain: S-adenosylmethionine:tRNA ribosyltransferase-isomerase (380 aa).

A compositionally biased stretch (basic and acidic residues) spans Met1 to Thr15. Positions Met1 to Ala24 are disordered.

Belongs to the QueA family. Monomer.

The protein localises to the cytoplasm. The enzyme catalyses 7-aminomethyl-7-carbaguanosine(34) in tRNA + S-adenosyl-L-methionine = epoxyqueuosine(34) in tRNA + adenine + L-methionine + 2 H(+). The protein operates within tRNA modification; tRNA-queuosine biosynthesis. Its function is as follows. Transfers and isomerizes the ribose moiety from AdoMet to the 7-aminomethyl group of 7-deazaguanine (preQ1-tRNA) to give epoxyqueuosine (oQ-tRNA). The sequence is that of S-adenosylmethionine:tRNA ribosyltransferase-isomerase from Oleidesulfovibrio alaskensis (strain ATCC BAA-1058 / DSM 17464 / G20) (Desulfovibrio alaskensis).